The chain runs to 251 residues: GTP cyclohydrolase 1 type 2 homolog (251 aa).

Positions 64, 65, 102, 219, and 223 each coordinate a divalent metal cation.

The protein belongs to the GTP cyclohydrolase I type 2/NIF3 family. As to quaternary structure, homohexamer.

This Chlamydia trachomatis serovar D (strain ATCC VR-885 / DSM 19411 / UW-3/Cx) protein is GTP cyclohydrolase 1 type 2 homolog.